The following is a 710-amino-acid chain: Pentatricopeptide repeat-containing protein At5g39680 (710 aa).

Residue Ser2 is modified to N-acetylserine. PPR repeat units lie at residues 35 to 64 (NELLKVCANSSYLRIGESIHAHLIVTNQSS), 68 to 98 (DAYQINSLINLYVKCRETVRARKLFDLMPER), 99 to 133 (NVVSWCAMMKGYQNSGFDFEVLKLFKSMFFSGESR), 135 to 169 (NEFVATVVFKSCSNSGRIEEGKQFHGCFLKYGLIS), 170 to 200 (HEFVRNTLVYMYSLCSGNGEAIRVLDDLPYC), 201 to 235 (DLSVFSSALSGYLECGAFKEGLDVLRKTANEDFVW), 236 to 270 (NNLTYLSSLRLFSNLRDLNLALQVHSRMVRFGFNA), 271 to 301 (EVEACGALINMYGKCGKVLYAQRVFDDTHAQ), 302 to 336 (NIFLNTTIMDAYFQDKSFEEALNLFSKMDTKEVPP), 337 to 371 (NEYTFAILLNSIAELSLLKQGDLLHGLVLKSGYRN), 372 to 402 (HVMVGNALVNMYAKSGSIEDARKAFSGMTFR), 403 to 437 (DIVTWNTMISGCSHHGLGREALEAFDRMIFTGEIP), 438 to 473 (NRITFIGVLQACSHIGFVEQGLHYFNQLMKKFDVQP), and 474 to 504 (DIQHYTCIVGLLSKAGMFKDAEDFMRTAPIE). The tract at residues 509 to 584 (AWRTLLNACY…EPGVSWIGIR (76 aa)) is type E motif. Positions 585–615 (NQTHVFLAEDNQHPEITLIYAKVKEVMSKIK) are type E(+) motif. The interval 616–710 (PLGYSPDVAG…DGQCSCCDYW (95 aa)) is type DYW motif.

The protein belongs to the PPR family. PCMP-H subfamily.

The chain is Pentatricopeptide repeat-containing protein At5g39680 (EMB2744) from Arabidopsis thaliana (Mouse-ear cress).